The sequence spans 102 residues: Large ribosomal subunit protein bL21 (102 aa).

It belongs to the bacterial ribosomal protein bL21 family. In terms of assembly, part of the 50S ribosomal subunit. Contacts protein L20.

Functionally, this protein binds to 23S rRNA in the presence of protein L20. This Enterococcus faecalis (strain ATCC 700802 / V583) protein is Large ribosomal subunit protein bL21.